Consider the following 192-residue polypeptide: Dynein axonemal light chain 1 (192 aa).

4 LRR repeats span residues 49 to 70 (NCEKLSLSTNCIEKIANLNGLK), 71 to 92 (YLKILSLGRNNIKNLNGLEAVG), 94 to 115 (TLEELWISYNLIEKLKGIHVMK), and 116 to 137 (KLKVLYMSNNLVKDWAEFSKLG). Positions 150–192 (NPLEEKHTAEGNWMEEAVKRLPKLKKLDGNPVIKQEEEEGDES) constitute an LRRCT domain.

Belongs to the dynein light chain LC1-type family. Interacts with DNAH5, a outer arm dynein heavy chain. Interacts with tubulin located within the A-tubule of the outer doublets in a ATP-independent manner.

The protein resides in the cytoplasm. The protein localises to the cytoskeleton. It localises to the cilium axoneme. Its function is as follows. Part of the multisubunit axonemal ATPase complexes that generate the force for cilia motility and govern beat frequency. Component of the outer arm dynein (ODA). May be involved in a mechanosensory feedback mechanism controlling ODA activity based on external conformational cues by tethering the outer arm dynein heavy chain (DNAH5) to the microtubule within the axoneme. In Xenopus laevis (African clawed frog), this protein is Dynein axonemal light chain 1 (dnal1).